The chain runs to 155 residues: 6,7-dimethyl-8-ribityllumazine synthase (155 aa).

5-amino-6-(D-ribitylamino)uracil-binding positions include phenylalanine 18, 49–51 (ALE), and 75–77 (CVI). 80-81 (ET) provides a ligand contact to (2S)-2-hydroxy-3-oxobutyl phosphate. Catalysis depends on histidine 83, which acts as the Proton donor. Residue asparagine 108 coordinates 5-amino-6-(D-ribitylamino)uracil. Arginine 122 contacts (2S)-2-hydroxy-3-oxobutyl phosphate.

This sequence belongs to the DMRL synthase family.

It carries out the reaction (2S)-2-hydroxy-3-oxobutyl phosphate + 5-amino-6-(D-ribitylamino)uracil = 6,7-dimethyl-8-(1-D-ribityl)lumazine + phosphate + 2 H2O + H(+). It functions in the pathway cofactor biosynthesis; riboflavin biosynthesis; riboflavin from 2-hydroxy-3-oxobutyl phosphate and 5-amino-6-(D-ribitylamino)uracil: step 1/2. Catalyzes the formation of 6,7-dimethyl-8-ribityllumazine by condensation of 5-amino-6-(D-ribitylamino)uracil with 3,4-dihydroxy-2-butanone 4-phosphate. This is the penultimate step in the biosynthesis of riboflavin. The sequence is that of 6,7-dimethyl-8-ribityllumazine synthase from Bartonella henselae (strain ATCC 49882 / DSM 28221 / CCUG 30454 / Houston 1) (Rochalimaea henselae).